The primary structure comprises 562 residues: Berberine bridge enzyme-like C-1 (562 aa).

The first 19 residues, 1 to 19 (MFPLIILISFSFTFLSASA), serve as a signal peptide directing secretion. N-linked (GlcNAc...) asparagine glycosylation is found at asparagine 29 and asparagine 41. A disulfide bridge connects residues cysteine 33 and cysteine 90. The FAD-binding PCMH-type domain occupies 68–244 (NMPKPTVIIL…YAWKIRLVKV (177 aa)). Histidine 105 bears the Pros-8alpha-FAD histidine mark. N-linked (GlcNAc...) asparagine glycans are attached at residues asparagine 359, asparagine 498, and asparagine 558.

Belongs to the oxygen-dependent FAD-linked oxidoreductase family. Requires FAD as cofactor. Mostly expressed in roots.

The protein localises to the vacuole. It functions in the pathway alkaloid biosynthesis; nicotine biosynthesis. Its function is as follows. Involved in the biosynthesis of pyridine alkaloid natural products, leading mainly to the production of anabasine, anatabine, nicotine and nornicotine, effective deterrents against herbivores with antiparasitic and pesticide properties (neurotoxins); nornicotine serves as the precursor in the synthesis of the carcinogen compound N'-nitrosonornicotine (NNN). Catalyzes a late oxidation step subsequent to the pyridine ring condensation reaction in the biosynthesis of alkaloids. This is Berberine bridge enzyme-like C-1 from Nicotiana tabacum (Common tobacco).